Reading from the N-terminus, the 198-residue chain is Recombination protein RecR (198 aa).

The C4-type zinc finger occupies cysteine 57–cysteine 72. A Toprim domain is found at glycine 80–proline 175.

It belongs to the RecR family.

In terms of biological role, may play a role in DNA repair. It seems to be involved in an RecBC-independent recombinational process of DNA repair. It may act with RecF and RecO. In Desulforudis audaxviator (strain MP104C), this protein is Recombination protein RecR.